The following is a 1912-amino-acid chain: Chromodomain-helicase-DNA-binding protein 4 (1912 aa).

The interval 1–157 is disordered; sequence MASGLGSPSP…PKSSAQLLED (157 aa). Residues 35-45 show a composition bias toward acidic residues; the sequence is NEEDPEEDLSE. Serine 44 bears the Phosphoserine mark. Positions 113–131 are enriched in basic residues; sequence GKKKKKKLGPKKEKKSKSK. Lysine 133 is covalently cross-linked (Glycyl lysine isopeptide (Lys-Gly) (interchain with G-Cter in SUMO2)). The segment covering 135 to 145 has biased composition (acidic residues); that stretch reads EEEEEDDDDDS. Residues lysine 146, lysine 179, and lysine 297 each participate in a glycyl lysine isopeptide (Lys-Gly) (interchain with G-Cter in SUMO2) cross-link. The tract at residues 243 to 360 is disordered; it reads ATEVAPPPPP…KKKKGEEEVT (118 aa). The KIKL motif lies at 295 to 298; sequence KIKL. Serine 303 is modified (phosphoserine). Residue lysine 304 forms a Glycyl lysine isopeptide (Lys-Gly) (interchain with G-Cter in SUMO2) linkage. Serine 308, serine 309, serine 310, and serine 319 each carry phosphoserine. Residues 311–323 are compositionally biased toward acidic residues; that stretch reads EDDDLDVESDFDD. A compositionally biased stretch (basic residues) spans 340–353; it reads SRSRKKLRTTKKKK. Position 367 is a phosphothreonine (threonine 367). The segment at 370–417 adopts a PHD-type 1 zinc-finger fold; it reads QDYCEVCQQGGEIILCDTCPRAYHMVCLDPDMEKAPEGKWSCPHCEKE. Serine 428 is subject to Phosphoserine. Residues 449–496 form a PHD-type 2 zinc finger; that stretch reads MEFCRVCKDGGELLCCDTCPSSYHIHCLNPPLPEIPNGEWLCPRCTCP. The 101-residue stretch at 494–594 folds into the Chromo 1 domain; that stretch reads TCPALKGKVQ…SGDFGGDEEK (101 aa). 2 disordered regions span residues 510–537 and 578–603; these read WGQP…PLEG and NDMD…NKDP. The segment covering 513 to 522 has biased composition (pro residues); that stretch reads PPSPTPVPRP. Serine 515 carries the phosphoserine modification. Residues threonine 517 and threonine 529 each carry the phosphothreonine modification. Position 531 is a phosphoserine (serine 531). Glycyl lysine isopeptide (Lys-Gly) (interchain with G-Cter in SUMO2) cross-links involve residues lysine 618 and lysine 696. The Chromo 2 domain maps to 622–697; sequence MMIHRILNHS…KLKKVKLRKL (76 aa). At threonine 703 the chain carries Phosphothreonine. Residue lysine 711 forms a Glycyl lysine isopeptide (Lys-Gly) (interchain with G-Cter in SUMO1); alternate linkage. Residue lysine 711 forms a Glycyl lysine isopeptide (Lys-Gly) (interchain with G-Cter in SUMO2); alternate linkage. A Helicase ATP-binding domain is found at 738–922; sequence RFSWAQGTDT…FHLLNFLTPE (185 aa). 751–758 contacts ATP; sequence DEMGLGKT. Residues 873-876 carry the DEAH box motif; that stretch reads DEAH. One can recognise a Helicase C-terminal domain in the interval 1054–1203; sequence LLQKMLKNLK…LTHLVVRPGL (150 aa). Phosphoserine is present on serine 1209. Glycyl lysine isopeptide (Lys-Gly) (interchain with G-Cter in SUMO2) cross-links involve residues lysine 1212, lysine 1228, lysine 1239, and lysine 1304. A phosphoserine mark is found at serine 1308, serine 1349, and serine 1370. Disordered stretches follow at residues 1344–1401 and 1525–1562; these read NYND…KPLP and EENK…PAED. Residues lysine 1528 and lysine 1529 each participate in a glycyl lysine isopeptide (Lys-Gly) (interchain with G-Cter in SUMO2) cross-link. A phosphoserine mark is found at serine 1531, serine 1535, and serine 1537. Residues 1535 to 1544 are compositionally biased toward pro residues; the sequence is SPSPKTPTPS. Phosphothreonine is present on residues threonine 1542, threonine 1549, and threonine 1553. A Glycyl lysine isopeptide (Lys-Gly) (interchain with G-Cter in SUMO2) cross-link involves residue lysine 1565. Position 1570 is a phosphoserine (serine 1570). The span at 1570 to 1584 shows a compositional bias: basic and acidic residues; sequence SLKEEESIEGEKEVK. Disordered stretches follow at residues 1570–1589 and 1594–1644; these read SLKE…TAPE and CTQA…VEKV. Lysine 1572 is covalently cross-linked (Glycyl lysine isopeptide (Lys-Gly) (interchain with G-Cter in SUMO2)). Serine 1576 carries the post-translational modification Phosphoserine. The segment at 1577 to 1912 is required for interaction with PCNT; sequence IEGEKEVKST…PTPQQVAQQQ (336 aa). Lysine 1584 is covalently cross-linked (Glycyl lysine isopeptide (Lys-Gly) (interchain with G-Cter in SUMO2)). Phosphoserine is present on serine 1602. Residues 1603–1644 are compositionally biased toward basic and acidic residues; that stretch reads EDEKVVVEPPEGEEKVEKAEVKERTEEPMETEPKGAADVEKV. Residues lysine 1606, lysine 1617, and lysine 1636 each participate in a glycyl lysine isopeptide (Lys-Gly) (interchain with G-Cter in SUMO2) cross-link. Residue lysine 1643 forms a Glycyl lysine isopeptide (Lys-Gly) (interchain with G-Cter in SUMO2); alternate linkage. Position 1643 is an N6-acetyllysine; alternate (lysine 1643). Lysine 1647 participates in a covalent cross-link: Glycyl lysine isopeptide (Lys-Gly) (interchain with G-Cter in SUMO2). Threonine 1653 is subject to Phosphothreonine. Glycyl lysine isopeptide (Lys-Gly) (interchain with G-Cter in SUMO2) cross-links involve residues lysine 1660 and lysine 1670. Threonine 1679 bears the Phosphothreonine mark. Residues lysine 1687 and lysine 1865 each participate in a glycyl lysine isopeptide (Lys-Gly) (interchain with G-Cter in SUMO2) cross-link.

It belongs to the SNF2/RAD54 helicase family. Component of the nucleosome remodeling and deacetylase (NuRD) repressor complex, composed of core proteins MTA1, MTA2, MTA3, RBBP4, RBBP7, HDAC1, HDAC2, MBD2, MBD3, and peripherally associated proteins CDK2AP1, CDK2AP2, GATAD2A, GATAD2B, CHD3, CHD4 and CHD5. The exact stoichiometry of the NuRD complex is unknown, and some subunits such as MBD2 and MBD3, GATAD2A and GATAD2B, and CHD3, CHD4 and CHD5 define mutually exclusive NuRD complexes. Interacts with IKFZ1; the interaction is direct and when in part of the NuRD complex. Part of a complex containing ATR and HDAC2. Interacts with HDAC2; the interaction is direct. Interacts with the cohesin complex component RAD21; the interaction is direct. Interacts with the ISWI chromatin remodeling complex component SMARCA5; the interaction is direct. Interacts with ZGPAT; the interaction is direct. Interacts with ZMYND8; the interaction is direct, appears to occur with monomeric ZMYND8, and is increased following DNA damage. Interacts with BCL6. Interacts with BRD4. Interacts with CBX1. Interacts with CBX3. Interacts with CBX5. Interacts with GATAD2A. Interacts with HDAC1. Interacts with KLF1; the interaction depends on sumoylation of KLF1, and leads to its transcriptional repression. Interacts with MTA1. Interacts with PCNT. Interacts with RBBP7. Interacts with SETX. Interacts with TRIM27. Interacts with histone H3. Interacts with histone H4. Does not interact with PWWP2A. Does not interact with PWWP2B. Interacts (via KIKL motif) with BRD3 (via NET domain). It depends on Zn(2+) as a cofactor. Widely expressed.

Its subcellular location is the nucleus. It is found in the cytoplasm. It localises to the cytoskeleton. The protein resides in the microtubule organizing center. The protein localises to the centrosome. The catalysed reaction is ATP + H2O = ADP + phosphate + H(+). Functionally, ATP-dependent chromatin-remodeling factor that binds and distorts nucleosomal DNA. Acts as a component of the histone deacetylase NuRD complex which participates in the remodeling of chromatin. Localizes to acetylated damaged chromatin in a ZMYND8-dependent manner, to promote transcriptional repression and double-strand break repair by homologous recombination. Involved in neurogenesis. This chain is Chromodomain-helicase-DNA-binding protein 4 (CHD4), found in Homo sapiens (Human).